Reading from the N-terminus, the 133-residue chain is Salmonella pathogenicity island 2 protein C (133 aa).

In terms of assembly, interacts with the mammalian NIPSNAP3A and HOOK3 proteins in infected cells.

The protein resides in the secreted. It localises to the cytoplasm. In terms of biological role, virulence protein that plays a central role in mammalian macrophage infection, by inhibiting phagosome-lysosome fusion and cellular trafficking, including trafficking of organelles that are devoid of Salmonella. May act by disrupting the function of the mammalian HOOK3 protein, a protein involved in the cellular traffic. Also required for actin ADP-ribosylase SpvB activity. The polypeptide is Salmonella pathogenicity island 2 protein C (spiC) (Salmonella typhimurium (strain 14028s / SGSC 2262)).